Consider the following 108-residue polypeptide: MFFQTTIVAALAFLAVATPLALRTDSRCNTESVKCCNKSEDAETFKKSASAALIPIKIGDITGKVYSECSPIVGLIGGSSCSAQTVCCDNAKFNGLVNIGCTPINVAL.

Positions 1–17 (MFFQTTIVAALAFLAVA) are cleaved as a signal peptide. Intrachain disulfides connect cysteine 28–cysteine 87, cysteine 35–cysteine 81, cysteine 36–cysteine 69, and cysteine 88–cysteine 101. Asparagine 37 is a glycosylation site (N-linked (GlcNAc...) asparagine).

It belongs to the fungal hydrophobin family. In terms of assembly, self-assembles to form functional amyloid fibrils called rodlets. Self-assembly into fibrillar rodlets occurs spontaneously at hydrophobic:hydrophilic interfaces and the rodlets further associate laterally to form amphipathic monolayers.

It is found in the secreted. It localises to the cell wall. Functionally, aerial growth, conidiation, and dispersal of filamentous fungi in the environment rely upon a capability of their secreting small amphipathic proteins called hydrophobins (HPBs) with low sequence identity. Class I can self-assemble into an outermost layer of rodlet bundles on aerial cell surfaces, conferring cellular hydrophobicity that supports fungal growth, development and dispersal; whereas Class II form highly ordered films at water-air interfaces through intermolecular interactions but contribute nothing to the rodlet structure. Vmh3 is a class I hydrophobin that is essential for the maintenance of the surface hydrophobicity of the mycelium and might be involved in the development of fruiting bodies. Plays an important role in hyphal resistance against environmental stress. Necessary for the efficient biodegradation of lignin. The sequence is that of Class I hydrophobin 3 from Pleurotus ostreatus (Oyster mushroom).